We begin with the raw amino-acid sequence, 351 residues long: UPF0104 membrane protein MTH_887 (351 aa).

The next 8 membrane-spanning stretches (helical) occupy residues 20–40 (IVLS…FAGF), 51–71 (SPYF…LWTL), 137–157 (VFEF…IMTW), 165–185 (IVVS…VYAG), 244–264 (FVIG…RLYV), 275–295 (AVPL…PILP), 304–324 (ILVG…AASV), and 328–348 (IASY…YGKQ).

Belongs to the UPF0104 family.

It is found in the cell membrane. The chain is UPF0104 membrane protein MTH_887 from Methanothermobacter thermautotrophicus (strain ATCC 29096 / DSM 1053 / JCM 10044 / NBRC 100330 / Delta H) (Methanobacterium thermoautotrophicum).